Reading from the N-terminus, the 530-residue chain is MESIINLIFYIIIFLILIDFLKKNISFRKNEPPRGGVAFPIFGDLPKLGENPHRYLTNLAMKKGGIYSVWLGDEKVFILTDPEAVRDAWVKQFRNFSDHPKTKSVRIFSGNFNDMAFAEYSQWKINSKWVSSAFTKTKLKTIGDLIEKESNYFIEHLKAYSNSGQPIFPKPYISKFGINVISGMMFSQVISKDESVDKGAMEKLTVPIQAVFKRLGADNLDDFISILQPVFYFQNEKFKRQVQEIYDYLEGIYNQHDTNLDTENPKDLMDLLIISTEGKERDMIIHIGMDCLLAGSDSTSATCEWFCLFMINNPDVQKKAYQELINALKDEDNKKFIPISKKDNCPYMLSIFKEVLRLRPVGVLGIPRVALEETTIMGYTIPKGSQIFQNVYGMSHLFVSDPYKFKPERWIEYKKQKDLLKEKEMQQLQEGADVVIDNKNNIKNNNSSNKPNSKTNSIFDDLDKVSIPYSVGNRKCPGASLSELALFSLCSNILLNFELKSIDGKPIDDTEVYGLTIHTKVHPISLTLRP.

Residues 1–21 (MESIINLIFYIIIFLILIDFL) traverse the membrane as a helical segment. Heme is bound at residue Cys-476.

It belongs to the cytochrome P450 family. It depends on heme as a cofactor.

It localises to the membrane. This chain is Probable cytochrome P450 519A1 (cyp519A1), found in Dictyostelium discoideum (Social amoeba).